The following is a 308-amino-acid chain: UPF0026 protein jhp_0109 (308 aa).

Residues 18–247 enclose the Radical SAM core domain; the sequence is FGKSLGVDLS…VSLPKRSTAQ (230 aa). Residues Cys33, Cys37, and Cys40 each coordinate [4Fe-4S] cluster.

Belongs to the UPF0026 family. It depends on [4Fe-4S] cluster as a cofactor.

The polypeptide is UPF0026 protein jhp_0109 (Helicobacter pylori (strain J99 / ATCC 700824) (Campylobacter pylori J99)).